Consider the following 183-residue polypeptide: ATP-dependent protease subunit HslV (183 aa).

Threonine 2 is an active-site residue. Na(+) is bound by residues alanine 157, cysteine 160, and threonine 163.

Belongs to the peptidase T1B family. HslV subfamily. In terms of assembly, a double ring-shaped homohexamer of HslV is capped on each side by a ring-shaped HslU homohexamer. The assembly of the HslU/HslV complex is dependent on binding of ATP.

The protein localises to the cytoplasm. It carries out the reaction ATP-dependent cleavage of peptide bonds with broad specificity.. Its activity is regulated as follows. Allosterically activated by HslU binding. In terms of biological role, protease subunit of a proteasome-like degradation complex believed to be a general protein degrading machinery. In Marinomonas sp. (strain MWYL1), this protein is ATP-dependent protease subunit HslV.